The chain runs to 529 residues: Peptide chain release factor 3 (529 aa).

Positions 11 to 280 (AKRRTFAIIS…GLVEWAPAPM (270 aa)) constitute a tr-type G domain. Residues 20-27 (SHPDAGKT), 88-92 (DTPGH), and 142-145 (NKLD) each bind GTP.

It belongs to the TRAFAC class translation factor GTPase superfamily. Classic translation factor GTPase family. PrfC subfamily.

The protein localises to the cytoplasm. In terms of biological role, increases the formation of ribosomal termination complexes and stimulates activities of RF-1 and RF-2. It binds guanine nucleotides and has strong preference for UGA stop codons. It may interact directly with the ribosome. The stimulation of RF-1 and RF-2 is significantly reduced by GTP and GDP, but not by GMP. In Shigella flexneri serotype 5b (strain 8401), this protein is Peptide chain release factor 3.